The chain runs to 445 residues: Nuclear hormone receptor family member nhr-1 (445 aa).

A disordered region spans residues 19–55; it reads PMVNSQRNEDPSMYMNGSAASVSHTNGSSSMGNDQKF. Polar residues predominate over residues 36–51; the sequence is SAASVSHTNGSSSMGN. The nuclear receptor DNA-binding region spans 70–145; the sequence is GELCAVCSDL…VGMDAKALQI (76 aa). 2 NR C4-type zinc fingers span residues 73 to 93 and 109 to 133; these read CAVC…CNGC and CQYN…FNKC. The region spanning 179-444 is the NR LBD domain; that stretch reads QDQEIIDQLT…PFVKELCMKR (266 aa).

This sequence belongs to the nuclear hormone receptor family.

Its subcellular location is the nucleus. Functionally, orphan nuclear receptor which acts in concert with the insulin/IGF-1-like signaling (IIS) pathway during osmotic stress, perhaps in response to a ligand modified by the sulfotransferase ssu-1. In Caenorhabditis elegans, this protein is Nuclear hormone receptor family member nhr-1 (nhr-1).